A 338-amino-acid chain; its full sequence is Cap-specific mRNA (nucleoside-2'-O-)-methyltransferase (338 aa).

Tyrosine 22 provides a ligand contact to mRNA. Positions 39, 66, 68, 72, 95, 97, 116, and 138 each coordinate S-adenosyl-L-methionine. Positions 169–249 (PAASSLKWRC…NKIIRNRIII (81 aa)) are binding to NPH-I. The binding to Rap94 stretch occupies residues 169–333 (PAASSLKWRC…NTKKSVRGNK (165 aa)). Lysine 175 functions as the For methyltransferase activity in the catalytic mechanism. Residues 177 to 180 (RCPF), aspartate 182, 205 to 207 (SAE), and glutamate 233 each bind mRNA. A disordered region spans residues 305 to 338 (HHEPTQRKVPSKNTMLKSRNTKKSVRGNKQGRRT). The span at 323-338 (RNTKKSVRGNKQGRRT) shows a compositional bias: basic residues.

This sequence belongs to the class I-like SAM-binding methyltransferase superfamily. Poxvirus/kinetoplastid 2'-O-MTase family. As to quaternary structure, interacts with poly(A) polymerase catalytic subunit OPG063. Interacts with OPG109 and OPG123; these interactions might help linking transcription to capping and polyadenylation.

It is found in the virion. It catalyses the reaction a 5'-end (N(7)-methyl 5'-triphosphoguanosine)-ribonucleoside in mRNA + S-adenosyl-L-methionine = a 5'-end (N(7)-methyl 5'-triphosphoguanosine)-(2'-O-methyl-ribonucleoside) in mRNA + S-adenosyl-L-homocysteine + H(+). Its function is as follows. Displays methyltransferase, positive regulation of the poly(A) polymerase and transcription elongation activities. Involved in the modification of both mRNA ends and in intermediate and late gene positive transcription elongation. At the mRNAs 5' end, methylates the ribose 2' OH group of the first transcribed nucleotide, thereby producing a 2'-O-methylpurine cap. At the 3' end, functions as a processivity factor which stimulates the activity of the viral poly(A) polymerase OPG063 that creates mRNA's poly(A) tail. In the presence of OPG102, OPG063 does not dissociate from the RNA allowing tail elongation to around 250 adenylates. The polypeptide is Cap-specific mRNA (nucleoside-2'-O-)-methyltransferase (OPG102) (Oryctolagus cuniculus (Rabbit)).